The following is a 244-amino-acid chain: Type III pantothenate kinase (244 aa).

Residue 9–16 (DAGNSSLK) participates in ATP binding. Substrate is bound by residues Tyr-90 and 97–100 (GVDR). Asp-99 functions as the Proton acceptor in the catalytic mechanism. Thr-122 is a binding site for ATP. Thr-172 serves as a coordination point for substrate.

The protein belongs to the type III pantothenate kinase family. As to quaternary structure, homodimer. It depends on NH4(+) as a cofactor. The cofactor is K(+).

The protein localises to the cytoplasm. It catalyses the reaction (R)-pantothenate + ATP = (R)-4'-phosphopantothenate + ADP + H(+). It participates in cofactor biosynthesis; coenzyme A biosynthesis; CoA from (R)-pantothenate: step 1/5. Catalyzes the phosphorylation of pantothenate (Pan), the first step in CoA biosynthesis. This is Type III pantothenate kinase from Thiobacillus denitrificans (strain ATCC 25259 / T1).